A 504-amino-acid chain; its full sequence is MSFSVDVLANIAIELQRGIGHQDRFQRLITTLRQVLECDASALLRYDSRQFIPLAIDGLAKDVLGRRFALEGHPRLEAIARAGDVVRFPADSELPDPYDGLIPGQESLKVHACVGLPLFAGQNLIGALTLDGMQPDQFDVFSDEELRLIAALAAGALSNALLIEQLESQNMLPGDATPFEAVKQTQMIGLSPGMTQLKKEIEIVAASDLNVLISGETGTGKELVAKAIHEASPRAVNPLVYLNCAALPESVAESELFGHVKGAFTGAISNRSGKFEMADNGTLFLDEIGELSLALQAKLLRVLQYGDIQRVGDDRSLRVDVRVLAATNRDLREEVLAGRFRADLFHRLSVFPLSVPPLRERGDDVILLAGYFCEQCRLRLGLSRVVLSAGARNLLQHYRFPGNVRELEHAIHRAVVLARATRNGDEVILEAQHFAFPEVTLPPPEAAAVPVVKQNLREATEAFQRETIRQALAQNHHNWAACARMLETDVANLHRLAKRLGMKD.

The residue at position 57 (D57) is a 4-aspartylphosphate. The Sigma-54 factor interaction domain occupies 187-416; the sequence is MIGLSPGMTQ…LEHAIHRAVV (230 aa). Residues 215-222 and 278-287 contribute to the ATP site; these read GETGTGKE and ADNGTLFLDE. Residues 479–498 constitute a DNA-binding region (H-T-H motif); that stretch reads WAACARMLETDVANLHRLAK.

It participates in nitrogen metabolism; nitric oxide reduction. Functionally, required for the expression of anaerobic nitric oxide (NO) reductase, acts as a transcriptional activator for at least the norVW operon. Activation also requires sigma-54. The sequence is that of Anaerobic nitric oxide reductase transcription regulator NorR from Escherichia coli O9:H4 (strain HS).